Reading from the N-terminus, the 380-residue chain is tRNA-specific 2-thiouridylase MnmA (380 aa).

ATP-binding positions include 14 to 21 and Met40; that span reads GLSGGVDS. An interaction with target base in tRNA region spans residues 100–102; that stretch reads NPD. Cys105 functions as the Nucleophile in the catalytic mechanism. Cys105 and Cys203 are joined by a disulfide. Gly129 serves as a coordination point for ATP. The segment at 153–155 is interaction with tRNA; that stretch reads KDQ. The active-site Cysteine persulfide intermediate is Cys203. The interaction with tRNA stretch occupies residues 322-323; it reads RY.

The protein belongs to the MnmA/TRMU family.

The protein localises to the cytoplasm. It catalyses the reaction S-sulfanyl-L-cysteinyl-[protein] + uridine(34) in tRNA + AH2 + ATP = 2-thiouridine(34) in tRNA + L-cysteinyl-[protein] + A + AMP + diphosphate + H(+). Its function is as follows. Catalyzes the 2-thiolation of uridine at the wobble position (U34) of tRNA, leading to the formation of s(2)U34. This Leptothrix cholodnii (strain ATCC 51168 / LMG 8142 / SP-6) (Leptothrix discophora (strain SP-6)) protein is tRNA-specific 2-thiouridylase MnmA.